Consider the following 148-residue polypeptide: Protoporphyrinogen IX oxidase (148 aa).

Transmembrane regions (helical) follow at residues 7-27, 59-79, 86-106, and 128-148; these read YFLW…AALF, FIAS…LLIA, GGWL…HFYC, and FNEI…VKPF. Residue histidine 15 participates in heme binding. Lysine 92 lines the heme pocket.

It belongs to the HemJ family. In terms of assembly, homodimer. Requires heme b as cofactor.

The protein localises to the cell membrane. It catalyses the reaction protoporphyrinogen IX + 3 A = protoporphyrin IX + 3 AH2. Its pathway is porphyrin-containing compound metabolism; protoporphyrin-IX biosynthesis; protoporphyrin-IX from protoporphyrinogen-IX: step 1/1. Catalyzes the oxidation of protoporphyrinogen IX to protoporphyrin IX. Is involved in the biosynthesis of tetrapyrrole molecules like heme. Does not use oxygen or artificial electron acceptors such as menadione or benzoquinone. The chain is Protoporphyrinogen IX oxidase from Helicobacter pylori (strain J99 / ATCC 700824) (Campylobacter pylori J99).